A 122-amino-acid chain; its full sequence is MIQQETRLKVADNSGAREILTIKVLGGSGRKFANIGDVIVASVKQATPGGAVKKGDVVKAVIVRTKSGARRPDGSYIKFDDNAAVIIRDDKTPRGTRIFGPVARELREGGYMKIVSLAPEVL.

This sequence belongs to the universal ribosomal protein uL14 family. Part of the 50S ribosomal subunit. Forms a cluster with proteins L3 and L19. In the 70S ribosome, L14 and L19 interact and together make contacts with the 16S rRNA in bridges B5 and B8.

In terms of biological role, binds to 23S rRNA. Forms part of two intersubunit bridges in the 70S ribosome. The chain is Large ribosomal subunit protein uL14 from Streptococcus equi subsp. equi (strain 4047).